Here is a 263-residue protein sequence, read N- to C-terminus: Pyruvate formate-lyase-activating enzyme (263 aa).

The Radical SAM core domain maps to 23–260 (VDGPGIRFVV…TETYEEYKKR (238 aa)). Positions 37, 41, and 44 each coordinate [4Fe-4S] cluster. S-adenosyl-L-methionine contacts are provided by residues 43-45 (YCH), G87, 142-144 (DIK), and H215.

The protein belongs to the organic radical-activating enzymes family. [4Fe-4S] cluster is required as a cofactor.

The protein resides in the cytoplasm. It carries out the reaction glycyl-[formate C-acetyltransferase] + reduced [flavodoxin] + S-adenosyl-L-methionine = glycin-2-yl radical-[formate C-acetyltransferase] + semiquinone [flavodoxin] + 5'-deoxyadenosine + L-methionine + H(+). Its function is as follows. Activation of pyruvate formate-lyase under anaerobic conditions by generation of an organic free radical, using S-adenosylmethionine and reduced flavodoxin as cosubstrates to produce 5'-deoxy-adenosine. The protein is Pyruvate formate-lyase-activating enzyme (act) of Streptococcus mutans serotype c (strain ATCC 700610 / UA159).